Consider the following 368-residue polypeptide: Glutamine synthetase root isozyme 2 (368 aa).

The GS beta-grasp domain maps to 19-99 (IIAEYIWVGG…VMCDCYEPNG (81 aa)). The disordered stretch occupies residues 38 to 66 (RTLSGPVDDPSKLPKWNFDGSSTGQAPGD). One can recognise a GS catalytic domain in the interval 106 to 368 (KRHGAAKIFS…NGDGKGAAAP (263 aa)).

Belongs to the glutamine synthetase family. Homooctamer. As to expression, found mainly in the vascular tissues of seedling roots.

Its subcellular location is the cytoplasm. It carries out the reaction L-glutamate + NH4(+) + ATP = L-glutamine + ADP + phosphate + H(+). Plays a role in the flow of nitrogen into nitrogenous organic compounds. The sequence is that of Glutamine synthetase root isozyme 2 (GLN2) from Zea mays (Maize).